We begin with the raw amino-acid sequence, 201 residues long: UPF0056 membrane protein PH0760 (201 aa).

Helical transmembrane passes span 8 to 28, 49 to 69, 73 to 93, 111 to 131, 140 to 160, and 181 to 201; these read FMIL…VPVF, ITVF…FKFF, IDAF…EMLS, VAVI…TTVM, GIVI…LYSG, and LILT…AFGI.

It belongs to the UPF0056 (MarC) family.

It is found in the cell membrane. The protein is UPF0056 membrane protein PH0760 of Pyrococcus horikoshii (strain ATCC 700860 / DSM 12428 / JCM 9974 / NBRC 100139 / OT-3).